The following is a 244-amino-acid chain: 5-oxoprolinase subunit A (244 aa).

This sequence belongs to the LamB/PxpA family. Forms a complex composed of PxpA, PxpB and PxpC.

The enzyme catalyses 5-oxo-L-proline + ATP + 2 H2O = L-glutamate + ADP + phosphate + H(+). Catalyzes the cleavage of 5-oxoproline to form L-glutamate coupled to the hydrolysis of ATP to ADP and inorganic phosphate. The sequence is that of 5-oxoprolinase subunit A from Escherichia coli (strain SE11).